Reading from the N-terminus, the 312-residue chain is Putative tricarboxylate transport protein, mitochondrial (312 aa).

Solcar repeat units follow at residues 23–111 (EKTV…LKSQ), 122–208 (VMRL…LKDW), and 218–303 (ISKP…IIEF). Helical transmembrane passes span 29–49 (IVIG…TEYV), 75–95 (VNGH…YGSI), 126–146 (LCGL…METV), 164–184 (FVHG…YKGV), 221–241 (PIVG…NTPI), and 286–306 (VCLD…FLDV).

The protein belongs to the mitochondrial carrier (TC 2.A.29) family.

The protein resides in the mitochondrion inner membrane. In terms of biological role, transport of citrate across inner mitochondrial membrane. This chain is Putative tricarboxylate transport protein, mitochondrial, found in Caenorhabditis elegans.